Here is a 1426-residue protein sequence, read N- to C-terminus: B-cell CLL/lymphoma 9 protein (1426 aa).

2 stretches are compositionally biased toward polar residues: residues 1–21 (MHSS…SSPK) and 34–46 (MSPS…DSKF). Residues 1 to 173 (MHSSNPKVRS…TEPTPAQKTP (173 aa)) form a disordered region. Low complexity predominate over residues 47–62 (SNQGKQGGSASQSQPS). A compositionally biased stretch (gly residues) spans 78–94 (GPGGSMGLKNGAGNGAK). Composition is skewed to basic and acidic residues over residues 100 to 112 (ERSI…DQRD) and 120 to 135 (SDIK…KSQD). Ser104 is modified (phosphoserine). Residues 136–170 (SQHTPHSMTPSNATAPRSSTPSHGQTTATEPTPAQ) are compositionally biased toward polar residues. Ser157 is subject to Phosphoserine. At Thr172 the chain carries Phosphothreonine. Residues 177-205 (VYVFSTEMANKAAEAVLKGQVETIVSFHI) are interaction with PYGO1. Polar residues predominate over residues 207–226 (NISNNKTERSTAPLNTQISA). Disordered stretches follow at residues 207 to 439 (NISN…RDVP) and 597 to 625 (PKIP…PNPQ). 2 stretches are compositionally biased toward pro residues: residues 232–241 (KPLPQQPPAP) and 256–272 (PTPP…APPR). Residues 304-320 (GPNSTPNNRAVTPVSQG) show a composition bias toward polar residues. Phosphothreonine is present on Thr315. Residues Ser318 and Ser352 each carry the phosphoserine modification. Residues 355–380 (QLEHRERSLQTLRDIQRMLFPDEKEF) show a composition bias toward basic and acidic residues. The segment at 358–374 (HRERSLQTLRDIQRMLF) is interaction with CTNNB1. A compositionally biased stretch (polar residues) spans 382-392 (GAQSGGPQQNP). Residues Ser687 and Ser689 each carry the phosphoserine modification. Positions 787–895 (MSQGPGSNSG…PQTPSQLAGM (109 aa)) are disordered. Residue Arg801 is modified to Asymmetric dimethylarginine. Over residues 823 to 836 (NPSSNPTSLNTAPP) the composition is skewed to low complexity. Residue Lys844 is modified to N6-acetyllysine. A compositionally biased stretch (polar residues) spans 867–891 (TMHQVQSPMLGSPSGNLKSPQTPSQ). A phosphoserine mark is found at Ser907 and Ser917. Disordered regions lie at residues 910-1002 (VLGS…PTLS), 1032-1052 (VASS…SMNN), 1152-1203 (PFPH…GPDS), and 1253-1275 (PRGE…HMQG). Positions 937–947 (PKPPLQSPGIP) are enriched in pro residues. The span at 1158–1176 (PSGGQGSFPGGMGFPGEGP) shows a compositional bias: gly residues.

It belongs to the BCL9 family. Binds to beta-catenin (CTNNB1), PYGO1 and PYGO2; the interaction with PYGO1 increases PYGO1 affinity to histone H3 methylated at 'Lys 4'. As to expression, detected at low levels in thymus, prostate, testis, ovary and small intestine, and at lower levels in spleen, colon and blood.

Its subcellular location is the nucleus. Involved in signal transduction through the Wnt pathway. Promotes beta-catenin's transcriptional activity. The sequence is that of B-cell CLL/lymphoma 9 protein (BCL9) from Homo sapiens (Human).